We begin with the raw amino-acid sequence, 263 residues long: Translation initiation factor 2 subunit alpha (263 aa).

Positions 12 to 83 constitute an S1 motif domain; the sequence is GEILIATVKQ…RKGTIDVSLK (72 aa).

This sequence belongs to the eIF-2-alpha family. As to quaternary structure, heterotrimer composed of an alpha, a beta and a gamma chain.

EIF-2 functions in the early steps of protein synthesis by forming a ternary complex with GTP and initiator tRNA. This chain is Translation initiation factor 2 subunit alpha, found in Sulfurisphaera tokodaii (strain DSM 16993 / JCM 10545 / NBRC 100140 / 7) (Sulfolobus tokodaii).